The chain runs to 470 residues: MTEKEKKLWGGRFQENASSILERIGQSISFDHKLYKEDIQGSIAHARMLKQIGILNSEELSKIEIALAQIKTELEEGKFEFKSELEDIHMHIEFRLTELIGETGKKLHTARSRNDQVTQDVRLYILNQGKEILKSIINLRSSLYQKAKQSLDVIIPGYTHLQIAQPIRASQYLLSWFWALERDQEFFRFAFKASEELALGSGAMAGVNYPTDREFLKKELGLSKVSPNSMDGVSSRDHILEFLFACTQLMIHVSRICEDIILYSSQEFGILKLPDSLTTGSSIMPQKKNPDIAELIRGKSGRVIGNLNHLLVMLKGLPSTYNRDLQEDKLALFDSIETVQISLEGIREMIEGWIWIPERAEVSLKNGFATATDLADFLVNEKKIPFRTAHELVGTLVGVCVKQKKTLFDLPESDRVSISKYFVGKEYEDAVSLSLSADKKISYGGTSKKRQEEQLKIALDSLKEAERLFL.

Belongs to the lyase 1 family. Argininosuccinate lyase subfamily.

Its subcellular location is the cytoplasm. It catalyses the reaction 2-(N(omega)-L-arginino)succinate = fumarate + L-arginine. It participates in amino-acid biosynthesis; L-arginine biosynthesis; L-arginine from L-ornithine and carbamoyl phosphate: step 3/3. The protein is Argininosuccinate lyase of Leptospira interrogans serogroup Icterohaemorrhagiae serovar copenhageni (strain Fiocruz L1-130).